Here is a 318-residue protein sequence, read N- to C-terminus: L-lactate dehydrogenase (318 aa).

NAD(+) contacts are provided by residues V18, D39, K44, Y69, and 83–84; that span reads GA. Residues Q86 and R92 each contribute to the substrate site. Residues S105, 122 to 124, and S147 each bind NAD(+); that span reads VSN. Residue 124–127 participates in substrate binding; sequence NPVD. 152 to 155 provides a ligand contact to substrate; it reads DTSR. Residue H179 is the Proton acceptor of the active site. Y225 carries the post-translational modification Phosphotyrosine. Position 234 (T234) interacts with substrate.

Belongs to the LDH/MDH superfamily. LDH family. Homotetramer.

The protein localises to the cytoplasm. It carries out the reaction (S)-lactate + NAD(+) = pyruvate + NADH + H(+). The protein operates within fermentation; pyruvate fermentation to lactate; (S)-lactate from pyruvate: step 1/1. In terms of biological role, catalyzes the conversion of lactate to pyruvate. This is L-lactate dehydrogenase from Clostridium botulinum (strain 657 / Type Ba4).